The primary structure comprises 177 residues: Large ribosomal subunit protein uL10 (177 aa).

This sequence belongs to the universal ribosomal protein uL10 family. Part of the ribosomal stalk of the 50S ribosomal subunit. The N-terminus interacts with L11 and the large rRNA to form the base of the stalk. The C-terminus forms an elongated spine to which L12 dimers bind in a sequential fashion forming a multimeric L10(L12)X complex.

Its function is as follows. Forms part of the ribosomal stalk, playing a central role in the interaction of the ribosome with GTP-bound translation factors. The polypeptide is Large ribosomal subunit protein uL10 (Leptospira interrogans serogroup Icterohaemorrhagiae serovar copenhageni (strain Fiocruz L1-130)).